Here is a 436-residue protein sequence, read N- to C-terminus: MRQALPLVTRQGDRIAIVSGLRTPFARQATAFHGIPAVDLGKMVVGELLARSEIPADAIEQLVFGQVVQMPEAPNIAREIVLGTGMNVHTDAYSVSRACATSFQAVANVAESLMAGTIRAGIAGGADSSSVLPIGVSKALARVLVDVNKARTTRQRLTLFSRLRLRDLLPVPPAVAEYSTGLRMGDTAEQMAKTYGITREQQDALAHRSHQRAAQAWAEGKLAEEVMTTYVPPYKNPFAEDNNIRGASTLADYAKLRPAFDRKHGSVTAANSTPLTDGAAAVILMTESRAKELGLHPLGYLRSYAFTAIDVWQDMLLGPAWSTPLALERAGLTMADLTLFDMHEAFAAQTLANLQLLGSERFAREVLGRAQATGEVDDAKFNVLGGSIAYGHPFAATGARMITQTLHELRRRGGGFGLVTACAAGGLGAAMVLEAE.

The active-site Acyl-thioester intermediate is cysteine 99. Active-site proton acceptor residues include histidine 392 and cysteine 422.

This sequence belongs to the thiolase-like superfamily. Thiolase family. In terms of assembly, heterotetramer of two alpha chains (FadJ) and two beta chains (FadI).

It localises to the cytoplasm. The catalysed reaction is an acyl-CoA + acetyl-CoA = a 3-oxoacyl-CoA + CoA. Its pathway is lipid metabolism; fatty acid beta-oxidation. Its function is as follows. Catalyzes the final step of fatty acid oxidation in which acetyl-CoA is released and the CoA ester of a fatty acid two carbons shorter is formed. This chain is 3-ketoacyl-CoA thiolase, found in Salmonella paratyphi A (strain ATCC 9150 / SARB42).